Reading from the N-terminus, the 932-residue chain is Beta-mannosidase A (932 aa).

Residues 1–21 form the signal peptide; sequence MRIREQTILALLSPGLPPVTG. 5 N-linked (GlcNAc...) asparagine glycosylation sites follow: N40, N248, N283, N317, and N348. E480 serves as the catalytic Proton donor. N-linked (GlcNAc...) asparagine glycans are attached at residues N538, N609, N632, N659, N739, N762, and N791.

This sequence belongs to the glycosyl hydrolase 2 family. Beta-mannosidase A subfamily. In terms of assembly, homodimer.

Its subcellular location is the secreted. It carries out the reaction Hydrolysis of terminal, non-reducing beta-D-mannose residues in beta-D-mannosides.. It functions in the pathway glycan metabolism; N-glycan degradation. Its function is as follows. Exoglycosidase that cleaves the single beta-linked mannose residue from the non-reducing end of beta-mannosidic oligosaccharides of various complexity and length. Involved in the degradation of polymeric mannan and galactomannan. The chain is Beta-mannosidase A (mndA) from Aspergillus clavatus (strain ATCC 1007 / CBS 513.65 / DSM 816 / NCTC 3887 / NRRL 1 / QM 1276 / 107).